We begin with the raw amino-acid sequence, 487 residues long: Sodium-coupled neutral amino acid symporter 1 (487 aa).

Over 1–74 (MMHFKSGLEL…EYIPGTTSLG (74 aa)) the chain is Cytoplasmic. Serine 6 carries the phosphoserine modification. Threonine 11 carries the post-translational modification Phosphothreonine. Residues serine 25, serine 28, serine 49, and serine 52 each carry the phosphoserine modification. A Phosphothreonine modification is found at threonine 54. At serine 56 the chain carries Phosphoserine. Residues 75–97 (MSVFNLSNAIMGSGILGLAFALA) form a helical membrane-spanning segment. At 98–112 (NTGILLFLVLLTSVT) the chain is on the extracellular side. A helical membrane pass occupies residues 113–133 (LLSIYSINLLLICSKETGCMV). Residues 134–147 (YEKLGEQVFGTTGK) lie on the Cytoplasmic side of the membrane. Residues 148–168 (FVIFGATSLQNTGAMLSYLFI) form a helical membrane-spanning segment. Residues 169-188 (VKNELPSAIKFLMGKEETFS) are Extracellular-facing. Residues 189 to 211 (AWYVDGRVLVVIVTFGIILPLCL) form a helical membrane-spanning segment. The Cytoplasmic segment spans residues 212 to 216 (LKNLG). The chain crosses the membrane as a helical span at residues 217 to 237 (YLGYTSGFSLSCMVFFLIVVI). At 238–275 (YKKFQIPCIVPELNSTISANSTNADTCTPKYVTFNSKT) the chain is on the extracellular side. A disulfide bond links cysteine 245 and cysteine 264. Residues asparagine 251 and asparagine 257 are each glycosylated (N-linked (GlcNAc...) asparagine). A helical transmembrane segment spans residues 276-296 (VYALPTIAFAFVCHPSVLPIY). Residues 297–312 (SELKDRSQKKMQMVSN) are Cytoplasmic-facing. The chain crosses the membrane as a helical span at residues 313 to 333 (ISFFAMFVMYFLTAIFGYLTF). Residues 334-350 (YDNVQSDLLHKYQSKDD) lie on the Extracellular side of the membrane. Residues 351 to 371 (ILILTVRLAVIVAVILTVPVL) traverse the membrane as a helical segment. Residues 372–393 (FFTVRSSLFELAKKTKFNLCRH) lie on the Cytoplasmic side of the membrane. A helical membrane pass occupies residues 394-414 (TVVTCILLVVINLLVIFIPSM). At 415-416 (KD) the chain is on the extracellular side. A helical membrane pass occupies residues 417–437 (IFGVVGVTSANMLIFILPSSL). Residues 438–452 (YLKITDQDGDKGTQR) lie on the Cytoplasmic side of the membrane. A helical membrane pass occupies residues 453–473 (IWAALFLGLGVLFSLVSIPLV). Topologically, residues 474–487 (IYDWACSSSSDEGH) are extracellular.

It belongs to the amino acid/polyamine transporter 2 family. In terms of processing, N-glycosylation plays an important role in the L-glutamine transport. Expressed in the cerebral cortex by pyramidal and GABAergic neurons, astrocytes and other non-neuronal cells (at protein level). Expressed in placenta, heart, lung, skeletal muscle, spleen, stomach and testis. Highly expressed in cytotrophoblast cells from term placenta.

It localises to the cell membrane. The catalysed reaction is L-glutamine(in) + Na(+)(in) = L-glutamine(out) + Na(+)(out). It catalyses the reaction L-alanine(in) + Na(+)(in) = L-alanine(out) + Na(+)(out). It carries out the reaction L-asparagine(in) + Na(+)(in) = L-asparagine(out) + Na(+)(out). The enzyme catalyses L-histidine(in) + Na(+)(in) = L-histidine(out) + Na(+)(out). The catalysed reaction is L-serine(in) + Na(+)(in) = L-serine(out) + Na(+)(out). It catalyses the reaction L-cysteine(in) + Na(+)(in) = L-cysteine(out) + Na(+)(out). It carries out the reaction L-methionine(in) + Na(+)(in) = L-methionine(out) + Na(+)(out). The enzyme catalyses glycine(in) + Na(+)(in) = glycine(out) + Na(+)(out). The catalysed reaction is L-threonine(in) + Na(+)(in) = L-threonine(out) + Na(+)(out). It catalyses the reaction L-proline(in) + Na(+)(in) = L-proline(out) + Na(+)(out). With respect to regulation, inhibited by alpha-(methylamino)isobutyric acid (MeAIB). Inhibited by lithium, potassium, choline ions, N-methylglucamine. The pH dependence has an allosteric effect on the transport. In terms of biological role, symporter that cotransports short-chain neutral amino acids and sodium ions from the extraccellular to the intracellular side of the cell membrane. The transport is elctrogenic, pH dependent and driven by the Na(+) electrochemical gradient. Participates in the astroglia-derived glutamine transport into GABAergic interneurons for neurotransmitter GABA de novo synthesis. May also contributes to amino acid transport in placental trophoblasts. Also regulates synaptic plasticity. This Homo sapiens (Human) protein is Sodium-coupled neutral amino acid symporter 1 (SLC38A1).